A 120-amino-acid polypeptide reads, in one-letter code: NAD(P)H-quinone oxidoreductase subunit 3, chloroplastic (120 aa).

A run of 3 helical transmembrane segments spans residues 9 to 29 (FFWA…LISG), 64 to 84 (MFAL…PWAM), and 88 to 108 (VLGV…IIGL).

This sequence belongs to the complex I subunit 3 family. NDH is composed of at least 16 different subunits, 5 of which are encoded in the nucleus.

Its subcellular location is the plastid. It localises to the chloroplast thylakoid membrane. The enzyme catalyses a plastoquinone + NADH + (n+1) H(+)(in) = a plastoquinol + NAD(+) + n H(+)(out). It carries out the reaction a plastoquinone + NADPH + (n+1) H(+)(in) = a plastoquinol + NADP(+) + n H(+)(out). Functionally, NDH shuttles electrons from NAD(P)H:plastoquinone, via FMN and iron-sulfur (Fe-S) centers, to quinones in the photosynthetic chain and possibly in a chloroplast respiratory chain. The immediate electron acceptor for the enzyme in this species is believed to be plastoquinone. Couples the redox reaction to proton translocation, and thus conserves the redox energy in a proton gradient. The protein is NAD(P)H-quinone oxidoreductase subunit 3, chloroplastic of Nicotiana tabacum (Common tobacco).